Here is a 38-residue protein sequence, read N- to C-terminus: MTLMSGEGQGKSSSVKRVPTIAATLVFFFSNSFLPASR.

This is an uncharacterized protein from Saccharomyces cerevisiae (strain ATCC 204508 / S288c) (Baker's yeast).